A 225-amino-acid chain; its full sequence is Claudin-8 (225 aa).

Residues 1-7 lie on the Cytoplasmic side of the membrane; sequence MATYALQ. Residues 8–28 form a helical membrane-spanning segment; the sequence is MAALVLGGVGMVGTVAVTIMP. Topologically, residues 29 to 81 are extracellular; the sequence is QWRVSAFIESNIVVFENRWEGLWMNCMRHANIRMQCKVYDSLLALSPDLQASR. A helical transmembrane segment spans residues 82 to 102; that stretch reads GLMCAASVLAFLAFMTAILGM. Over 103 to 117 the chain is Cytoplasmic; the sequence is KCTRCTGDDENVKSR. Residues 118 to 138 traverse the membrane as a helical segment; the sequence is ILLTAGIIFFITGLVVLIPVS. Over 139-166 the chain is Extracellular; that stretch reads WVANSIIRDFYNPLVDVALKRELGEALY. A helical membrane pass occupies residues 167-187; sequence IGWTTALVLIAGGALFCCVFC. The Cytoplasmic portion of the chain corresponds to 188 to 225; it reads CTERSNSYRYSVPSHRTTQRSFHAEKRSPSIYSKSQYV. A Glycyl lysine isopeptide (Lys-Gly) (interchain with G-Cter in ubiquitin) cross-link involves residue lysine 213. The interactions with TJP1, TJP2 and TJP3 stretch occupies residues 224-225; it reads YV.

Belongs to the claudin family. As to quaternary structure, can form heteropolymeric strands with other claudins. Interacts with CLDN4. Directly interacts with TJP1/ZO-1, TJP2/ZO-2 and TJP3/ZO-3. Interacts with KLHL3. In terms of processing, ubiquitinated by the BCR(KLHL3) E3 ubiquitin ligase complex in the kidney, leading to its degradation. As to expression, expressed primarily in lung and kidney. Present in both cortical and medullar collecting ducts (at protein level).

Its subcellular location is the cell junction. The protein resides in the tight junction. The protein localises to the cell membrane. The enzyme catalyses chloride(in) = chloride(out). It catalyses the reaction bromide(in) = bromide(out). The catalysed reaction is iodide(out) = iodide(in). It carries out the reaction fluoride(in) = fluoride(out). In terms of biological role, can associate with other claudins to regulate tight junction structural and functional strand dynamics. May coassemble with CLDN4 into tight junction strands containing anion-selective channels that convey paracellular chloride permeability in renal collecting ducts. Cannot form tight junction strands on its own. The polypeptide is Claudin-8 (Mus musculus (Mouse)).